We begin with the raw amino-acid sequence, 143 residues long: Transcription antitermination protein NusB (143 aa).

The protein belongs to the NusB family.

Involved in transcription antitermination. Required for transcription of ribosomal RNA (rRNA) genes. Binds specifically to the boxA antiterminator sequence of the ribosomal RNA (rrn) operons. The sequence is that of Transcription antitermination protein NusB from Clostridium botulinum (strain Kyoto / Type A2).